We begin with the raw amino-acid sequence, 577 residues long: Torulene dioxygenase (577 aa).

The Fe(2+) site is built by histidine 239, histidine 291, histidine 361, and histidine 570.

This sequence belongs to the carotenoid oxygenase family. It depends on Fe(2+) as a cofactor.

The protein localises to the cytoplasm. The protein resides in the cytosol. It catalyses the reaction torulene + O2 = 4'-apo-beta-carotenal + 3-methyl-2-butenal. It participates in carotenoid biosynthesis. Functionally, torulene dioxygenase; part of the pathway that mediates the biosynthesis of neurosporaxanthin, a carboxylic apocarotenoid acting as an essential protective pigments and leading to orange pigmentation. CarT mediates the cleavage of torulene into beta-apo-4'-carotenal, the aldehyde corresponding to the acidic neurosporaxanthin. Is also active on other monocyclic synthetic substrates such as beta-apo-8'-carotenal and beta-apo-10'-carotenal to produce beta-apo-14'-carotenal and retinal(beta-apo-15'-carotenal), respectively. Neurosporaxanthin is synthesized from geranyl-geranyl pyrophosphate (GGPP) through several enzymatic activities. Phytoene synthase activity performed by the bifunctional enzyme carAR first produces phytoene from geranyl-geranyl pyrophosphate (GGPP). The phytoene dehydrogenase carB then introduces 4 desaturations to lead to lycopene which is substrate of the carotene cyclase activity of carAR that leads to the production of gamma-carotene. CarB then performs a 5th desaturation reaction to yield torulene. Torulene is the substrate of the dioxidase carT that breaks the molecule, removing five carbon atoms to yield beta-apo-4'-carotenal, whereas the aldehyde dehydrogenase carD mediates the last step by converting beta-apo-4'-carotenal into neurosporaxanthin. The sequence is that of Torulene dioxygenase from Fusarium fujikuroi (Bakanae and foot rot disease fungus).